Here is a 51-residue protein sequence, read N- to C-terminus: Large ribosomal subunit protein eL39 (51 aa).

It belongs to the eukaryotic ribosomal protein eL39 family.

The protein is Large ribosomal subunit protein eL39 of Pyrobaculum islandicum (strain DSM 4184 / JCM 9189 / GEO3).